Consider the following 439-residue polypeptide: 26S proteasome regulatory subunit 4 homolog (439 aa).

The tract at residues 1-46 is disordered; sequence MGNNQSQGQGDKGEKKDQPKYQPPPPPTQFGKKKKRRGAETSTKLP. 225 to 232 contributes to the ATP binding site; the sequence is GEPGTGKT.

Belongs to the AAA ATPase family.

Its subcellular location is the cytoplasm. The protein resides in the nucleus. Functionally, the 26S proteasome is involved in the ATP-dependent degradation of ubiquitinated proteins. The regulatory (or ATPase) complex confers ATP dependency and substrate specificity to the 26S complex. Plays an important role in regulating both growth and multicellular development. The protein is 26S proteasome regulatory subunit 4 homolog (psmC1) of Dictyostelium discoideum (Social amoeba).